A 2126-amino-acid polypeptide reads, in one-letter code: Polycystin family receptor for egg jelly (2126 aa).

Residues 1-18 (MWPGPALLLLGLGLGLGS) form the signal peptide. Residues 19–1068 (QPPPTGPRGL…AIISNLTQNP (1050 aa)) are Extracellular-facing. The disordered stretch occupies residues 20 to 71 (PPPTGPRGLPGVLRGAPGLGQGAESSVRGGDTGGLSPRAAPRHASPTPPRRC). N-linked (GlcNAc...) asparagine glycans are attached at residues N84, N94, N129, N192, N243, N325, N571, N761, N774, N807, N849, N888, N960, and N1063. One can recognise an REJ domain in the interval 102 to 797 (CIMQPVKINR…SMMFCEFADD (696 aa)). Residues 1069 to 1089 (ATFLAVLFIMILYAILAFWAL) traverse the membrane as a helical segment. At 1090 to 1273 (HRDVIDLYFR…VPKPFNRLQR (184 aa)) the chain is on the cytoplasmic side. A PLAT domain is found at 1114-1231 (LCYLVTIFTG…TLDATFSVTN (118 aa)). Residues 1274–1294 (LSCCLAMLLSSLVCNIMFFNL) traverse the membrane as a helical segment. Topologically, residues 1295 to 1311 (NQKEKIESRHMHIIRSM) are extracellular. Residues 1312-1332 (LIGIESVVITIPVQLLITFFF) form a helical membrane-spanning segment. Over 1333-1449 (TYSQKNLKMN…KTQIILPRWC (117 aa)) the chain is Cytoplasmic. Residues 1379 to 1431 (RAAVSTSAPEEKEAFETSQKHEKADTQMSNKNSSNNNQEASEGVPPKAFSSQP) form a disordered region. A compositionally biased stretch (basic and acidic residues) spans 1387–1403 (PEEKEAFETSQKHEKAD). The chain crosses the membrane as a helical span at residues 1450–1470 (VYIAWFLVFATSGISSFFIVF). Residues 1471-1483 (YGVTYGYAKSIEW) are Extracellular-facing. Residues 1484 to 1504 (LFASFCSFCQSVFLVQPCNIL) form a helical membrane-spanning segment. The Cytoplasmic portion of the chain corresponds to 1505–1580 (LRSGTRSYKP…RRENRIRRRS (76 aa)). Residues 1581 to 1601 (FLFLSYLVTHFIFLTLLLLLI) traverse the membrane as a helical segment. Over 1602-1838 (FSLRHNDSFY…DFNRKTSSEI (237 aa)) the chain is Extracellular. 4 N-linked (GlcNAc...) asparagine glycosylation sites follow: N1607, N1676, N1766, and N1817. The helical transmembrane segment at 1839–1859 (YLYAAILIFFCAYVVDEGYII) threads the bilayer. The Cytoplasmic segment spans residues 1860–1875 (RQERASYIRSVYNLLN). A helical membrane pass occupies residues 1876 to 1896 (FSLKCMFALLIVLFFWKYFLA). Residues 1897-1918 (TKMVQLYLADPEAFIPFHAVSR) are Extracellular-facing. The helical transmembrane segment at 1919-1939 (VDHFMRIILAFLLFLTILKTL) threads the bilayer. Topologically, residues 1940–1964 (RYSRFFYNVRLAQKAIQAALPGICH) are cytoplasmic. The chain crosses the membrane as a helical span at residues 1965–1985 (TALVVSIYSFMYVAFGYLVFG). Residues 1986 to 2019 (QHEWNYSNMIHATQTIFSYCVSAFQNTEFSGNKV) lie on the Extracellular side of the membrane. The chain crosses the membrane as a helical span at residues 2020–2040 (LGVLFLSSFMLVMICIFINLF). Topologically, residues 2041–2126 (QAVILSAYDE…NGKKMIYLVV (86 aa)) are cytoplasmic.

The protein belongs to the polycystin family. Exclusively expressed in testis.

The protein localises to the cell membrane. It localises to the cytoplasmic vesicle. It is found in the secretory vesicle. The protein resides in the acrosome membrane. Its subcellular location is the nucleus. Its function is as follows. Testis-specific protein that controls sperm transport and the timing of zona pellucida-evoked exocytosis of the sperm acrosome. This Mus musculus (Mouse) protein is Polycystin family receptor for egg jelly (Pkdrej).